The primary structure comprises 319 residues: tRNA uridine(34) hydroxylase (319 aa).

The region spanning K127–E221 is the Rhodanese domain. The active-site Cysteine persulfide intermediate is C181.

It belongs to the TrhO family.

The enzyme catalyses uridine(34) in tRNA + AH2 + O2 = 5-hydroxyuridine(34) in tRNA + A + H2O. Catalyzes oxygen-dependent 5-hydroxyuridine (ho5U) modification at position 34 in tRNAs. This Bacillus cereus (strain ATCC 10987 / NRS 248) protein is tRNA uridine(34) hydroxylase.